The following is a 208-amino-acid chain: Guanylate kinase (208 aa).

The Guanylate kinase-like domain occupies 4–185 (GNLYIISAPS…ALVDLEHILR (182 aa)). Residue 11 to 18 (APSGAGKS) coordinates ATP.

Belongs to the guanylate kinase family.

Its subcellular location is the cytoplasm. It catalyses the reaction GMP + ATP = GDP + ADP. Functionally, essential for recycling GMP and indirectly, cGMP. The sequence is that of Guanylate kinase from Histophilus somni (strain 129Pt) (Haemophilus somnus).